The following is a 337-amino-acid chain: GTPase Obg (337 aa).

In terms of domain architecture, Obg spans 1–159; it reads MKFVDSASIF…LMLNMELKLM (159 aa). Positions 160–323 constitute an OBG-type G domain; the sequence is ADVGLVGFPN…LKDELWREVS (164 aa). GTP contacts are provided by residues 166-173, 191-195, 213-216, 280-283, and 304-306; these read GFPNAGKS, FTTLV, DIPG, TKMD, and SAV. Ser173 and Thr193 together coordinate Mg(2+).

Belongs to the TRAFAC class OBG-HflX-like GTPase superfamily. OBG GTPase family. Monomer. The cofactor is Mg(2+).

It localises to the cytoplasm. An essential GTPase which binds GTP, GDP and possibly (p)ppGpp with moderate affinity, with high nucleotide exchange rates and a fairly low GTP hydrolysis rate. Plays a role in control of the cell cycle, stress response, ribosome biogenesis and in those bacteria that undergo differentiation, in morphogenesis control. The sequence is that of GTPase Obg from Pelodictyon phaeoclathratiforme (strain DSM 5477 / BU-1).